Consider the following 259-residue polypeptide: Ribonuclease HII (259 aa).

Residues 72–259 (ERIAGIDEAG…PVREALGVQS (188 aa)) enclose the RNase H type-2 domain. The a divalent metal cation site is built by aspartate 78, glutamate 79, and aspartate 170.

The protein belongs to the RNase HII family. The cofactor is Mn(2+). It depends on Mg(2+) as a cofactor.

The protein localises to the cytoplasm. The catalysed reaction is Endonucleolytic cleavage to 5'-phosphomonoester.. Endonuclease that specifically degrades the RNA of RNA-DNA hybrids. This Geobacillus thermodenitrificans (strain NG80-2) protein is Ribonuclease HII.